A 222-amino-acid polypeptide reads, in one-letter code: Triosephosphate isomerase (222 aa).

Position 9–11 (9–11) interacts with substrate; sequence NLK. Histidine 93 (electrophile) is an active-site residue. The active-site Proton acceptor is glutamate 141. Residues isoleucine 146, glycine 181, and 202-203 each bind substrate; that span reads AS.

This sequence belongs to the triosephosphate isomerase family. As to quaternary structure, homotetramer; dimer of dimers.

It is found in the cytoplasm. It catalyses the reaction D-glyceraldehyde 3-phosphate = dihydroxyacetone phosphate. The protein operates within carbohydrate biosynthesis; gluconeogenesis. It participates in carbohydrate degradation; glycolysis; D-glyceraldehyde 3-phosphate from glycerone phosphate: step 1/1. In terms of biological role, involved in the gluconeogenesis. Catalyzes stereospecifically the conversion of dihydroxyacetone phosphate (DHAP) to D-glyceraldehyde-3-phosphate (G3P). The chain is Triosephosphate isomerase from Methanoculleus marisnigri (strain ATCC 35101 / DSM 1498 / JR1).